The following is a 125-amino-acid chain: Small ribosomal subunit protein eS26 (125 aa).

Belongs to the eukaryotic ribosomal protein eS26 family.

The protein is Small ribosomal subunit protein eS26 (RPS26) of Sterkiella nova (Ciliate).